The chain runs to 263 residues: Small ribosomal subunit protein eS4 (263 aa).

An S4 RNA-binding domain is found at 42–104 (LPLIIFLRNR…TGENFRLIYD (63 aa)).

This sequence belongs to the eukaryotic ribosomal protein eS4 family.

The polypeptide is Small ribosomal subunit protein eS4 (RPS4) (Bos taurus (Bovine)).